Reading from the N-terminus, the 624-residue chain is Polycystin-2-like protein 2 (624 aa).

The Cytoplasmic portion of the chain corresponds to 1–31 (MAEASRWHRGGASKHKLHYRKEVEITTTLQE). A helical transmembrane segment spans residues 32–52 (LLLYFIFLINLCILTFGMVNP). At 53–276 (HMYYLNKVMS…YSVKLLRYVS (224 aa)) the chain is on the extracellular side. Residues N115 and N138 are each glycosylated (N-linked (GlcNAc...) asparagine). A helical transmembrane segment spans residues 277–297 (YYDYFIASCEITFCIFLFVFT). At 298–314 (TQEVKKIKEFKSAYFKS) the chain is on the cytoplasmic side. A helical membrane pass occupies residues 315-335 (IWNWLELLLLLLCFVAVSFNT). At 336–360 (YYNVQIFLLLGQLLKSTEKYSDFYF) the chain is on the extracellular side. Residues 361–381 (LACWHIYYNNIIAITIFFAWI) form a helical membrane-spanning segment. At 382–406 (KIFKFISFNKTMSQLSSTLSRCVKD) the chain is on the cytoplasmic side. Residues 407 to 427 (IVGFAIMFFIIFFAYAQLGFL) form a helical membrane-spanning segment. At 428-469 (VFGSQVDDFSTFQNSIFAQFRIVLGDFNFAGIQQANPILGPI) the chain is on the extracellular side. A helical transmembrane segment spans residues 470 to 490 (YFITFIFFVFFVLLNMFLAII). Topologically, residues 491 to 624 (NDTYSEVKAD…NQVVRKVSAL (134 aa)) are cytoplasmic. Residues 556–576 (ENEIQNAEQMKKWKERLEKKY) adopt a coiled-coil conformation.

Belongs to the polycystin family. Interacts with TRPC1 and TRPC5. As to expression, expressed only in testis. Expressed also in brain and kidney. In terms of tissue distribution, expressed only in transformed lymphoblasts.

The protein localises to the membrane. Its function is as follows. Exhibits a lower single conductance but no spontaneous channel activity. May function as a regulator of calcium channels or a channel component involving Ca2(+) homeostasis. The sequence is that of Polycystin-2-like protein 2 from Homo sapiens (Human).